Here is a 386-residue protein sequence, read N- to C-terminus: Succinate--CoA ligase [ADP-forming] subunit beta (386 aa).

The ATP-grasp domain maps to 9–244; it reads KDLLTSYAIP…PSQENVRDVL (236 aa). ATP is bound by residues lysine 46, 53–55, valine 102, and glutamate 107; that span reads GRG. Residues asparagine 199 and aspartate 213 each coordinate Mg(2+). Substrate contacts are provided by residues asparagine 264 and 321 to 323; that span reads GIM.

The protein belongs to the succinate/malate CoA ligase beta subunit family. In terms of assembly, heterotetramer of two alpha and two beta subunits. Requires Mg(2+) as cofactor.

It carries out the reaction succinate + ATP + CoA = succinyl-CoA + ADP + phosphate. It catalyses the reaction GTP + succinate + CoA = succinyl-CoA + GDP + phosphate. The protein operates within carbohydrate metabolism; tricarboxylic acid cycle; succinate from succinyl-CoA (ligase route): step 1/1. Succinyl-CoA synthetase functions in the citric acid cycle (TCA), coupling the hydrolysis of succinyl-CoA to the synthesis of either ATP or GTP and thus represents the only step of substrate-level phosphorylation in the TCA. The beta subunit provides nucleotide specificity of the enzyme and binds the substrate succinate, while the binding sites for coenzyme A and phosphate are found in the alpha subunit. This chain is Succinate--CoA ligase [ADP-forming] subunit beta, found in Chlamydia abortus (strain DSM 27085 / S26/3) (Chlamydophila abortus).